The following is a 209-amino-acid chain: Putative 3-methyladenine DNA glycosylase (209 aa).

A disordered region spans residues H189–R209. A compositionally biased stretch (basic residues) spans A197–R209.

The protein belongs to the DNA glycosylase MPG family.

The protein is Putative 3-methyladenine DNA glycosylase of Chlorobaculum parvum (strain DSM 263 / NCIMB 8327) (Chlorobium vibrioforme subsp. thiosulfatophilum).